We begin with the raw amino-acid sequence, 411 residues long: Multifunctional CCA protein (411 aa).

ATP is bound by residues G8 and R11. The CTP site is built by G8 and R11. Positions 21 and 23 each coordinate Mg(2+). ATP is bound by residues R91, R137, and R140. CTP contacts are provided by R91, R137, and R140. The HD domain maps to 226–327; the sequence is TGVHVMLVID…LRFLQETDAL (102 aa).

It belongs to the tRNA nucleotidyltransferase/poly(A) polymerase family. Bacterial CCA-adding enzyme type 1 subfamily. As to quaternary structure, monomer. Can also form homodimers and oligomers. Mg(2+) serves as cofactor. Requires Ni(2+) as cofactor.

It carries out the reaction a tRNA precursor + 2 CTP + ATP = a tRNA with a 3' CCA end + 3 diphosphate. The enzyme catalyses a tRNA with a 3' CCA end + 2 CTP + ATP = a tRNA with a 3' CCACCA end + 3 diphosphate. Catalyzes the addition and repair of the essential 3'-terminal CCA sequence in tRNAs without using a nucleic acid template. Adds these three nucleotides in the order of C, C, and A to the tRNA nucleotide-73, using CTP and ATP as substrates and producing inorganic pyrophosphate. tRNA 3'-terminal CCA addition is required both for tRNA processing and repair. Also involved in tRNA surveillance by mediating tandem CCA addition to generate a CCACCA at the 3' terminus of unstable tRNAs. While stable tRNAs receive only 3'-terminal CCA, unstable tRNAs are marked with CCACCA and rapidly degraded. The sequence is that of Multifunctional CCA protein from Methylobacillus flagellatus (strain ATCC 51484 / DSM 6875 / VKM B-1610 / KT).